Here is a 180-residue protein sequence, read N- to C-terminus: Large ribosomal subunit protein uL6 (180 aa).

The protein belongs to the universal ribosomal protein uL6 family. Part of the 50S ribosomal subunit.

Functionally, this protein binds to the 23S rRNA, and is important in its secondary structure. It is located near the subunit interface in the base of the L7/L12 stalk, and near the tRNA binding site of the peptidyltransferase center. The polypeptide is Large ribosomal subunit protein uL6 (Desulforapulum autotrophicum (strain ATCC 43914 / DSM 3382 / VKM B-1955 / HRM2) (Desulfobacterium autotrophicum)).